Reading from the N-terminus, the 323-residue chain is Beta-ketoacyl-[acyl-carrier-protein] synthase III (323 aa).

Residues Cys114 and His250 contribute to the active site. The segment at 251–255 (QANIR) is ACP-binding. The active site involves Asn280.

This sequence belongs to the thiolase-like superfamily. FabH family. As to quaternary structure, homodimer.

It localises to the cytoplasm. It carries out the reaction malonyl-[ACP] + acetyl-CoA + H(+) = 3-oxobutanoyl-[ACP] + CO2 + CoA. It participates in lipid metabolism; fatty acid biosynthesis. Catalyzes the condensation reaction of fatty acid synthesis by the addition to an acyl acceptor of two carbons from malonyl-ACP. Catalyzes the first condensation reaction which initiates fatty acid synthesis and may therefore play a role in governing the total rate of fatty acid production. Possesses both acetoacetyl-ACP synthase and acetyl transacylase activities. Its substrate specificity determines the biosynthesis of branched-chain and/or straight-chain of fatty acids. The protein is Beta-ketoacyl-[acyl-carrier-protein] synthase III of Alkalilimnicola ehrlichii (strain ATCC BAA-1101 / DSM 17681 / MLHE-1).